Here is a 321-residue protein sequence, read N- to C-terminus: Citrate synthase (321 aa).

Active-site residues include His-248 and Asp-306.

It belongs to the citrate synthase family.

It catalyses the reaction oxaloacetate + acetyl-CoA + H2O = citrate + CoA + H(+). Its pathway is carbohydrate metabolism; tricarboxylic acid cycle; isocitrate from oxaloacetate: step 1/2. The polypeptide is Citrate synthase (gltA) (Bartonella elizabethae (Rochalimaea elizabethae)).